Reading from the N-terminus, the 482-residue chain is Histone deacetylase 1 (482 aa).

The segment at 9-321 is histone deacetylase; sequence RKVCYYYDGD…WTYETAVALD (313 aa). Residues Gly27 and Lys31 each coordinate 1D-myo-inositol 1,4,5,6-tetrakisphosphate. Lys74 is subject to N6-acetyllysine; alternate. A Glycyl lysine isopeptide (Lys-Gly) (interchain with G-Cter in SUMO2); alternate cross-link involves residue Lys74. The active site involves His141. Zn(2+) contacts are provided by Asp176 and His178. Lys220 is subject to N6-acetyllysine. Cys261 bears the S-nitrosocysteine mark. Asp264 provides a ligand contact to Zn(2+). 1D-myo-inositol 1,4,5,6-tetrakisphosphate is bound at residue Arg270. Cys273 is subject to S-nitrosocysteine. Positions 390-400 are enriched in acidic residues; the sequence is PEESGDEDEED. The interval 390 to 482 is disordered; that stretch reads PEESGDEDEE…KGVKEEVKLA (93 aa). A phosphoserine mark is found at Ser393, Ser406, Ser409, Ser421, and Ser423. The segment covering 401–416 has biased composition (basic and acidic residues); the sequence is PDKRISICSSDKRIAC. The segment covering 417 to 427 has biased composition (acidic residues); that stretch reads EEEFSDSDEEG. An N6-methylated lysine; by EHMT2 modification is found at Lys432. Residue Lys438 forms a Glycyl lysine isopeptide (Lys-Gly) (interchain with G-Cter in SUMO2) linkage. Over residues 443–482 the composition is skewed to basic and acidic residues; the sequence is VKTEDEKEKDPEEKKEVTEEEKTKEEKQEAKGVKEEVKLA. Lys444 is covalently cross-linked (Glycyl lysine isopeptide (Lys-Gly) (interchain with G-Cter in SUMO2); alternate). Lys444 participates in a covalent cross-link: Glycyl lysine isopeptide (Lys-Gly) (interchain with G-Cter in SUMO); alternate. Glycyl lysine isopeptide (Lys-Gly) (interchain with G-Cter in SUMO2) cross-links involve residues Lys456, Lys457, and Lys473. Residue Lys476 forms a Glycyl lysine isopeptide (Lys-Gly) (interchain with G-Cter in SUMO2); alternate linkage. Lys476 is covalently cross-linked (Glycyl lysine isopeptide (Lys-Gly) (interchain with G-Cter in SUMO); alternate). Residue Lys480 forms a Glycyl lysine isopeptide (Lys-Gly) (interchain with G-Cter in SUMO2) linkage.

This sequence belongs to the histone deacetylase family. HD type 1 subfamily. As to quaternary structure, part of the core histone deacetylase (HDAC) complex composed of HDAC1, HDAC2, RBBP4 and RBBP7, the core complex associates with SIN3, SAP18 and SAP30 to form the SIN3 HDAC complex. Component of the nucleosome remodeling and deacetylase (NuRD) repressor complex, composed of core proteins MTA1, MTA2, MTA3, RBBP4, RBBP7, HDAC1, HDAC2, MBD2, MBD3, and peripherally associated proteins CDK2AP1, CDK2AP2, GATAD2A, GATAD2B, CHD3, CHD4 and CHD5. The exact stoichiometry of the NuRD complex is unknown, and some subunits such as MBD2 and MBD3, GATAD2A and GATAD2B, and CHD3, CHD4 and CHD5 define mutually exclusive NuRD complexes. Component of a BHC histone deacetylase complex that contains HDAC1, HDAC2, HMG20B/BRAF35, KDM1A, RCOR1/CoREST and PHF21A/BHC80. The BHC complex may also contain ZMYM2, ZNF217, ZMYM3, GSE1 and GTF2I. Component of a mSin3A corepressor complex that contains SIN3A, SAP130, SUDS3/SAP45, ARID4B/SAP180, HDAC1 and HDAC2. Found in a trimeric complex with APBB1 and TSHZ3; the interaction between HDAC1 and APBB1 is mediated by TSHZ3. Forms a complex comprising APPL1, RUVBL2, APPL2, CTNNB1 and HDAC2. Component of a RCOR/GFI/KDM1A/HDAC complex. Part of a complex composed of TRIM28, HDAC1, HDAC2 and EHMT2. Part of a complex containing at least CDYL, MIER1, MIER2, HDAC1 and HDAC2. The large PER complex involved in the histone deacetylation is composed of at least HDAC1, PER2, SFPQ and SIN3A. Associates with the 9-1-1 complex; interacts with HUS1. Found in a complex with DNMT3A and HDAC7. Found in a complex with YY1, SIN3A and GON4L. Identified in a histone deacetylase complex that contains DNTTIP1, HDAC1 and MIDEAS; this complex assembles into a tetramer that contains four copies of each protein chain. Found in a complex composed of at least SINHCAF, SIN3A, HDAC1, SAP30, RBBP4, OGT and TET1. Component of the SIN3B complex, which includes SIN3B, HDAC1, PHF12 and MORF4L1. Interacts with GFI1; the interaction is direct. Interacts directly with GFI1B. Interacts with TSHZ3 (via N-terminus); the interaction is direct. Interacts with APEX1; the interaction is not dependent on the acetylated status of APEX1. Interacts with BANP. Interacts with BAZ2A/TIP5. Interacts with BCL6. Interacts with BCOR. Interacts with BHLHE40/DEC1. Interacts with BRCC3; this interaction is enhanced in the presence of PWWP2B. Interacts with BRMS1. Interacts with BRMS1L. Interacts with C10orf90/FATS (via its N-terminal); the interaction prevents binding of HDAC1 to CDKN1A/p21 and facilitates the acetylation and stabilization of CDKN1A/p21. Interacts with CBFA2T3. Interacts with CCAR2. Interacts with CDK2AP1. Interacts with CHD3. Interacts with CHD4. Interacts with CHFR. Interacts with CIART. Interacts with CDKN1A/p21. Interacts with CDK5 complexed to CDK5R1 (p25). Interacts with CRY1. Interacts with DAXX. Interacts with DDIT3/CHOP. Interacts with DDX5. Interacts with DHX36; this interaction occurs in a RNA-dependent manner. Interacts with DNMT1. Interacts with DNTTIP1. Interacts with E4F1. Interacts with EP300. Interacts with ERCC6. Interacts with GATAD2A. Interacts with HCFC1. Interacts with HDAC9. Interacts with HUS1. Interacts with INSM1. Interacts with KDM4A. Interacts with KDM5A; this interaction impairs histone deacetylation. Interacts with KDM5B. Interacts with KLF1. Interacts with MBD3L2. Interacts with MIER1. Interacts with NFE4. Interacts with NR4A2/NURR1. Interacts with NR1D2 (via C-terminus). Interacts with NRIP1. Interacts with NSD2. Interacts with PACS2. Interacts with PHB2. Interacts with PPHLN1. Interacts with PRDM6. Interacts with PRDM16. Interacts with PWWP2A in a MTA1-dependent manner. Interacts with PWWP2B. Interacts with RB1. Interacts with RERE. Interacts with SANBR (via the BTB domain). Interacts with SAMSN1. Interacts with SAP30L. Interacts with SETDB1. Interacts with SIN3A. Interacts with SMAD3. Interacts with SMAD4; positively regulated by ZBTB7A. Interacts with SMARCAD1. Interacts with SMARCA4/BRG1. Interacts with SMYD2. Interacts with SMYD4 (via MYND-type zinc finger). Interacts with SP1; the interaction deacetylates SP1 and regulates its transcriptional activity. Interacts with SP3; the interaction deacetylates SP3 and regulates its transcriptional activity. In vitro, C(18) ceramides increase this interaction and the subsequent SP3 deacetylation and SP3-mediated repression of the TERT promoter. Interacts with SPEN/MINT. Interacts with SPHK2. Interacts with SUV39H1. Interacts with TGIF. Interacts with TGIF2. Interacts with TRAF6. Interacts with TRIM28; the interaction recruits HDAC1 to E2F1 and inhibits its acetylation. Interacts with TSC22D3 isoform 1; this interaction affects HDAC1 activity on MYOG promoter and thus inhibits MYOD1 transcriptional activity. Interacts with UHRF1. Interacts with UHRF2. Interacts with ZBTB7A. Interacts with ZMYND8. Interacts with ZMYND15. Interacts with ZNF431. Interacts with ZNF516; this interaction is enhanced in the presence of PWWP2B. Interacts with ZNF541. Interacts with ZNF638. Interacts with ZNHIT1. Interacts with the non-histone region of MACROH2A1. Identified in a complex with HDAC2, KCTD19, DNTTIP1 and ZNF541. Interacts with MSX3. Interacts with VRK1. Zn(2+) serves as cofactor. In terms of processing, sumoylated on Lys-444 and Lys-476; which promotes enzymatic activity. Desumoylated by SENP1. Post-translationally, phosphorylation on Ser-421 and Ser-423 promotes enzymatic activity and interactions with NuRD and SIN3 complexes. Phosphorylated by CDK5. Ubiquitinated by CHFR and KCTD11, leading to its degradation by the proteasome.

It is found in the nucleus. The catalysed reaction is N(6)-acetyl-L-lysyl-[histone] + H2O = L-lysyl-[histone] + acetate. It catalyses the reaction N(6)-acetyl-L-lysyl-[protein] + H2O = L-lysyl-[protein] + acetate. The enzyme catalyses N(6)-(2E)-butenoyl-L-lysyl-[protein] + H2O = (2E)-2-butenoate + L-lysyl-[protein]. It carries out the reaction N(6)-[(S)-lactoyl]-L-lysyl-[protein] + H2O = (S)-lactate + L-lysyl-[protein]. Inositol tetraphosphate (1D-myo-inositol 1,4,5,6-tetrakisphosphate) may act as an intermolecular glue between HDAC1 and N-Cor repressor complex components. Functionally, histone deacetylase that catalyzes the deacetylation of lysine residues on the N-terminal part of the core histones (H2A, H2B, H3 and H4). Histone deacetylation gives a tag for epigenetic repression and plays an important role in transcriptional regulation, cell cycle progression and developmental events. Histone deacetylases act via the formation of large multiprotein complexes. Acts as a component of the histone deacetylase NuRD complex which participates in the remodeling of chromatin. As part of the SIN3B complex is recruited downstream of the constitutively active genes transcriptional start sites through interaction with histones and mitigates histone acetylation and RNA polymerase II progression within transcribed regions contributing to the regulation of transcription. Also functions as a deacetylase for non-histone targets, such as NR1D2, RELA, SP1, SP3, STAT3 and TSHZ3. Deacetylates SP proteins, SP1 and SP3, and regulates their function. Component of the BRG1-RB1-HDAC1 complex, which negatively regulates the CREST-mediated transcription in resting neurons. Upon calcium stimulation, HDAC1 is released from the complex and CREBBP is recruited, which facilitates transcriptional activation. Deacetylates TSHZ3 and regulates its transcriptional repressor activity. Deacetylates 'Lys-310' in RELA and thereby inhibits the transcriptional activity of NF-kappa-B. Deacetylates NR1D2 and abrogates the effect of KAT5-mediated relieving of NR1D2 transcription repression activity. Component of a RCOR/GFI/KDM1A/HDAC complex that suppresses, via histone deacetylase (HDAC) recruitment, a number of genes implicated in multilineage blood cell development. Involved in CIART-mediated transcriptional repression of the circadian transcriptional activator: CLOCK-BMAL1 heterodimer. Required for the transcriptional repression of circadian target genes, such as PER1, mediated by the large PER complex or CRY1 through histone deacetylation. In addition to protein deacetylase activity, also has protein-lysine deacylase activity: acts as a protein decrotonylase and delactylase by mediating decrotonylation ((2E)-butenoyl) and delactylation (lactoyl) of histones, respectively. The polypeptide is Histone deacetylase 1 (HDAC1) (Bos taurus (Bovine)).